The chain runs to 193 residues: MSSLKHQLKTYHIPFDDQMLERLERYTALLLEWNRAHNLTGAKNSQEVEEHLIDSLYPLRFLPPFDSCADIGTGAGFPGLILAIALPKSHFDLIEPLKKRVAFLHYCVMELGLSNVSIHAKRIEALTLEAPDLITSRAVTSTQTLLSLARPLIAPHTSILFYKGERVLGEIQEEEGYTITPFKQRRYLFKQGV.

S-adenosyl-L-methionine-binding positions include glycine 72, phenylalanine 77, 123-124, and arginine 137; that span reads IE.

This sequence belongs to the methyltransferase superfamily. RNA methyltransferase RsmG family.

The protein resides in the cytoplasm. It catalyses the reaction guanosine(527) in 16S rRNA + S-adenosyl-L-methionine = N(7)-methylguanosine(527) in 16S rRNA + S-adenosyl-L-homocysteine. Specifically methylates the N7 position of guanine in position 527 of 16S rRNA. This is Ribosomal RNA small subunit methyltransferase G from Wolinella succinogenes (strain ATCC 29543 / DSM 1740 / CCUG 13145 / JCM 31913 / LMG 7466 / NCTC 11488 / FDC 602W) (Vibrio succinogenes).